Here is a 95-residue protein sequence, read N- to C-terminus: Cliotide T1 (95 aa).

A cross-link (cyclopeptide (Gly-Asn)) is located at residues 1–30; that stretch reads GIPCGESCVFIPCITGAIGCSCKSKVCYRN. 3 disulfide bridges follow: cysteine 4–cysteine 20, cysteine 8–cysteine 22, and cysteine 13–cysteine 27. Residues 31 to 95 constitute a propeptide, removed in mature form; the sequence is HVIAAEAKTM…KDHLKMSITN (65 aa).

Post-translationally, contains 3 disulfide bonds. In terms of processing, this is a cyclic peptide. As to expression, expressed in flower, stem, shoot, root, leaf, seed, pod and nodule (at protein level).

Its function is as follows. Probably participates in a plant defense mechanism. Active against Gram-negative bacteria E.coli ATCC 700926 (MIC=1.1 uM), K.pneumoniae ATTC 13883 (MIC=2.7 uM) and P.aeruginosa ATCC 39018 (MIC=4.7 uM). Has hemolytic and cytotoxic activity. The protein is Cliotide T1 of Clitoria ternatea (Butterfly pea).